The following is a 735-amino-acid chain: Phosphoribosylformylglycinamidine synthase subunit PurL (735 aa).

The active site involves His-50. 2 residues coordinate ATP: Tyr-53 and Lys-92. Mg(2+) is bound at residue Glu-94. Substrate is bound by residues 95–98 (SHNH) and Arg-117. The Proton acceptor role is filled by His-96. Asp-118 contacts Mg(2+). Gln-241 contacts substrate. Mg(2+) is bound at residue Asp-269. 313–315 (ESQ) provides a ligand contact to substrate. Positions 495 and 532 each coordinate ATP. Asn-533 lines the Mg(2+) pocket. Residue Ser-535 coordinates substrate.

Belongs to the FGAMS family. Monomer. Part of the FGAM synthase complex composed of 1 PurL, 1 PurQ and 2 PurS subunits.

The protein resides in the cytoplasm. The enzyme catalyses N(2)-formyl-N(1)-(5-phospho-beta-D-ribosyl)glycinamide + L-glutamine + ATP + H2O = 2-formamido-N(1)-(5-O-phospho-beta-D-ribosyl)acetamidine + L-glutamate + ADP + phosphate + H(+). The protein operates within purine metabolism; IMP biosynthesis via de novo pathway; 5-amino-1-(5-phospho-D-ribosyl)imidazole from N(2)-formyl-N(1)-(5-phospho-D-ribosyl)glycinamide: step 1/2. Functionally, part of the phosphoribosylformylglycinamidine synthase complex involved in the purines biosynthetic pathway. Catalyzes the ATP-dependent conversion of formylglycinamide ribonucleotide (FGAR) and glutamine to yield formylglycinamidine ribonucleotide (FGAM) and glutamate. The FGAM synthase complex is composed of three subunits. PurQ produces an ammonia molecule by converting glutamine to glutamate. PurL transfers the ammonia molecule to FGAR to form FGAM in an ATP-dependent manner. PurS interacts with PurQ and PurL and is thought to assist in the transfer of the ammonia molecule from PurQ to PurL. This Bartonella henselae (strain ATCC 49882 / DSM 28221 / CCUG 30454 / Houston 1) (Rochalimaea henselae) protein is Phosphoribosylformylglycinamidine synthase subunit PurL.